An 81-amino-acid polypeptide reads, in one-letter code: Cytochrome c oxidase subunit NDUFA4 (81 aa).

Over 1 to 14 (MLRHILGLAKKHPS) the chain is Mitochondrial matrix. K10 carries the post-translational modification N6-acetyllysine. The chain crosses the membrane as a helical span at residues 15 to 37 (LIPLFVFLGTGATGATLYLLRLA). Residues 38 to 81 (LFSPDVCWDRNNPEPWNKLGPNDQYKFYSVNVDYDKLKKERPDF) lie on the Mitochondrial intermembrane side of the membrane. S66 carries the post-translational modification Phosphoserine.

The protein belongs to the complex IV NDUFA4 subunit family. Component of the cytochrome c oxidase (complex IV, CIV), a multisubunit enzyme composed of 14 subunits. The complex is composed of a catalytic core of 3 subunits MT-CO1, MT-CO2 and MT-CO3, encoded in the mitochondrial DNA, and 11 supernumerary subunits COX4I, COX5A, COX5B, COX6A, COX6B, COX6C, COX7A, COX7B, COX7C, COX8 and NDUFA4, which are encoded in the nuclear genome. The complex exists as a monomer or a dimer and forms supercomplexes (SCs) in the inner mitochondrial membrane with NADH-ubiquinone oxidoreductase (complex I, CI) and ubiquinol-cytochrome c oxidoreductase (cytochrome b-c1 complex, complex III, CIII), resulting in different assemblies (supercomplex SCI(1)III(2)IV(1) and megacomplex MCI(2)III(2)IV(2)). Interacts with RAB5IF. Interacts with FLVCR2; this interaction occurs in the absence of heme and is disrupted upon heme binding.

The protein localises to the mitochondrion inner membrane. Functionally, component of the cytochrome c oxidase, the last enzyme in the mitochondrial electron transport chain which drives oxidative phosphorylation. The respiratory chain contains 3 multisubunit complexes succinate dehydrogenase (complex II, CII), ubiquinol-cytochrome c oxidoreductase (cytochrome b-c1 complex, complex III, CIII) and cytochrome c oxidase (complex IV, CIV), that cooperate to transfer electrons derived from NADH and succinate to molecular oxygen, creating an electrochemical gradient over the inner membrane that drives transmembrane transport and the ATP synthase. Cytochrome c oxidase is the component of the respiratory chain that catalyzes the reduction of oxygen to water. Electrons originating from reduced cytochrome c in the intermembrane space (IMS) are transferred via the dinuclear copper A center (CU(A)) of subunit 2 and heme A of subunit 1 to the active site in subunit 1, a binuclear center (BNC) formed by heme A3 and copper B (CU(B)). The BNC reduces molecular oxygen to 2 water molecules unsing 4 electrons from cytochrome c in the IMS and 4 protons from the mitochondrial matrix. NDUFA4 is required for complex IV maintenance. This chain is Cytochrome c oxidase subunit NDUFA4 (NDUFA4), found in Macaca fascicularis (Crab-eating macaque).